Here is a 443-residue protein sequence, read N- to C-terminus: Methyl-coenzyme M reductase I subunit beta (443 aa).

Coenzyme M is bound at residue tyrosine 367. Residue glycine 369 participates in coenzyme B binding.

Belongs to the methyl-coenzyme M reductase beta subunit family. As to quaternary structure, MCR is a hexamer of two alpha, two beta, and two gamma chains, forming a dimer of heterotrimers. Coenzyme F430 serves as cofactor.

The protein localises to the cytoplasm. It carries out the reaction coenzyme B + methyl-coenzyme M = methane + coenzyme M-coenzyme B heterodisulfide. Its pathway is one-carbon metabolism; methyl-coenzyme M reduction; methane from methyl-coenzyme M: step 1/1. With respect to regulation, methyl-coenzyme M reductase activity is inhibited by 3-nitrooxypropanol (3-NOP) in vitro and in vivo, by oxidation of its active site Ni(I), which stops both growth and methanogenesis. Is also inhibited by the reaction product CoM-S-S-CoB. In terms of biological role, component of the methyl-coenzyme M reductase (MCR) I that catalyzes the reductive cleavage of methyl-coenzyme M (CoM-S-CH3 or 2-(methylthio)ethanesulfonate) using coenzyme B (CoB or 7-mercaptoheptanoylthreonine phosphate) as reductant which results in the production of methane and the mixed heterodisulfide of CoB and CoM (CoM-S-S-CoB). This is the final step in methanogenesis. Neither N-6-mercaptohexanoylthreonine phosphate (H-S-HxoTP) nor N-8-mercaptooctanoylthreonine phosphate (H-SOcoTP) nor any other thiol compound such as CoA or CoM can substitute for CoB as the electron donor. The sequence is that of Methyl-coenzyme M reductase I subunit beta (mcrB) from Methanothermobacter marburgensis (strain ATCC BAA-927 / DSM 2133 / JCM 14651 / NBRC 100331 / OCM 82 / Marburg) (Methanobacterium thermoautotrophicum).